Reading from the N-terminus, the 550-residue chain is Chaperonin GroEL 2 (550 aa).

ATP-binding positions include 30 to 33, K51, 87 to 91, G415, 480 to 482, and D496; these read TLGP, DGTTT, and NAA.

This sequence belongs to the chaperonin (HSP60) family. As to quaternary structure, forms a cylinder of 14 subunits composed of two heptameric rings stacked back-to-back. Interacts with the co-chaperonin GroES.

Its subcellular location is the cytoplasm. The catalysed reaction is ATP + H2O + a folded polypeptide = ADP + phosphate + an unfolded polypeptide.. Its function is as follows. Together with its co-chaperonin GroES, plays an essential role in assisting protein folding. The GroEL-GroES system forms a nano-cage that allows encapsulation of the non-native substrate proteins and provides a physical environment optimized to promote and accelerate protein folding. This Erythrobacter litoralis (strain HTCC2594) protein is Chaperonin GroEL 2.